The following is a 348-amino-acid chain: S-adenosyl-L-methionine-dependent methyl transferase PigF (348 aa).

Glu199 is an S-adenosyl-L-methionine binding site. His247 acts as the Proton acceptor in catalysis.

The protein belongs to the class I-like SAM-binding methyltransferase superfamily. Cation-independent O-methyltransferase family.

Its pathway is antibiotic biosynthesis; prodigiosin biosynthesis. In terms of biological role, involved in the biosynthesis of 4-methoxy-2,2'-bipyrrole-5-carbaldehyde (MBC), one of the terminal products involved in the biosynthesis of the red antibiotic prodigiosin (Pig). Catalyzes the transfer of a methyl group from S-adenosyl-L-methionine (SAM) to the hydroxyl group of 4-hydroxy-2,2'-bipyrrole-5-carbaldehyde (HBC) to yield 4-methoxy-2,2'-bipyrrole-5-carbaldehyde (MBC). The protein is S-adenosyl-L-methionine-dependent methyl transferase PigF of Serratia sp. (strain ATCC 39006) (Prodigiosinella confusarubida).